Here is a 349-residue protein sequence, read N- to C-terminus: Ferredoxin--NADP reductase (349 aa).

Residues Asp35, Gln43, Tyr48, Val88, Phe123, Asp288, and Thr329 each coordinate FAD.

This sequence belongs to the ferredoxin--NADP reductase type 2 family. As to quaternary structure, homodimer. FAD serves as cofactor.

It catalyses the reaction 2 reduced [2Fe-2S]-[ferredoxin] + NADP(+) + H(+) = 2 oxidized [2Fe-2S]-[ferredoxin] + NADPH. The protein is Ferredoxin--NADP reductase of Colwellia psychrerythraea (strain 34H / ATCC BAA-681) (Vibrio psychroerythus).